A 415-amino-acid chain; its full sequence is Transfer protein TraSA (415 aa).

The FtsK domain occupies 127–326 (DGAVHYRDYR…HRVNDETSAN (200 aa)). 145–152 (GATESGKS) contributes to the ATP binding site.

The polypeptide is Transfer protein TraSA (traSA) (Streptomyces ambofaciens).